The primary structure comprises 250 residues: MEWSDEGIILGVRRHGESAAIVELLTRGHGRHLGMVRGGASARMRPLLQPGNSVLASWRARLDEHLGYYQLEATKMRAATLLGSSHAVYGVTHLASLARLLPERDPHEEIYQRLVLTLDDFDDFGVAAAHLIRFELAILAELGFGLDLSACAATGSTTELIYVSPKSGSAVSRSAGEPWRDRLLRLPAFLRDDEAESGNGWSGQDLFDGFELTGRFLLRNVLEPRGQSHSDARAGFINAITRALQRPAES.

This sequence belongs to the RecO family.

Its function is as follows. Involved in DNA repair and RecF pathway recombination. The protein is DNA repair protein RecO of Rhodopseudomonas palustris (strain TIE-1).